Reading from the N-terminus, the 342-residue chain is MKLELFDFDLPERLIAQVPLEKRDASRLMVLNKQTGEVTHDTFSQITDYFQTGDCLVLNNTRVLPARLFGMKEDTGAKVELLLLKQEEGDKWETLVKPAKRVKKGTVITFGDGRLQAVCTEELEHGGRKVEFQYTGIFYEVLESLGEMPLPPYIKEQLDDRERYQTVYSKEVGSAAAPTAGLHFTNELLDALKEKGVHIAFITLHVGLGTFRPVSADRIEEHEMHAEFYEMNEETAAELNRVRKEGGRIISVGTTSTRTLETIASAHDGEFKASSGWTSIFIYPGYTFKAIDGMITNFHLPKSSLIMLVSALAGREHVLKAYNEAVKEEYRFFSFGDAMLIQ.

The protein belongs to the QueA family. As to quaternary structure, monomer.

The protein localises to the cytoplasm. The enzyme catalyses 7-aminomethyl-7-carbaguanosine(34) in tRNA + S-adenosyl-L-methionine = epoxyqueuosine(34) in tRNA + adenine + L-methionine + 2 H(+). The protein operates within tRNA modification; tRNA-queuosine biosynthesis. Transfers and isomerizes the ribose moiety from AdoMet to the 7-aminomethyl group of 7-deazaguanine (preQ1-tRNA) to give epoxyqueuosine (oQ-tRNA). The polypeptide is S-adenosylmethionine:tRNA ribosyltransferase-isomerase (Bacillus pumilus (strain SAFR-032)).